The chain runs to 183 residues: Interleukin-36 beta (183 aa).

The propeptide occupies 1–30 (MMAFPPQSCVHVLPPKSIQMWEPNHNTMHG).

This sequence belongs to the IL-1 family. As to quaternary structure, interacts with cargo receptor TMED10; the interaction mediates the translocation from the cytoplasm into the ERGIC (endoplasmic reticulum-Golgi intermediate compartment) and thereby secretion. In terms of processing, N-terminal truncation leads to a dramatic enhancement of its activity (&gt;1000-fold).

Its subcellular location is the cytoplasm. It localises to the secreted. In terms of biological role, cytokine that binds to and signals through the IL1RL2/IL-36R receptor which in turn activates NF-kappa-B and MAPK signaling pathways in target cells linked to a pro-inflammatory response. Part of the IL-36 signaling system that is thought to be present in epithelial barriers and to take part in local inflammatory response; similar to the IL-1 system with which it shares the coreceptor IL1RAP. Stimulates production of interleukin-6 and interleukin-8 in synovial fibrobasts, articular chondrocytes and mature adipocytes. Induces expression of a number of antimicrobial peptides including beta-defensin 4 and beta-defensin 103 as well as a number of matrix metalloproteases. Seems to be involved in skin inflammatory response by acting on keratinocytes, dendritic cells and indirectly on T-cells to drive tissue infiltration, cell maturation and cell proliferation. Induces the production of pro-inflammatory cytokines in bone marrow-derived dendritic cells (BMDCs), including IL-12, Il-1 beta, IL-6, TNF-alpha and IL-23, and activates p38 MAPK phosphorylation in BMDCs. Involved in dendritic cell maturation by stimulating the surface expression of CD80, CD86 and MHC class II. Induces the production of IFN-gamma, IL-4 and IL-17 by T-helper 1 (Th1) cells, cultured CD4(+) T-cells and splenocytes. This is Interleukin-36 beta from Mus musculus (Mouse).